The sequence spans 827 residues: MDSKYNHYEIEKDKNQKWIDKKYFINHDLDKKPFSIILPPPNVTGQLHLGHALNGYLQDSVIRYKKLEGYDVLFLPAMDHAGIATQIKVEESLAKENLLKQDIGREKFLKFSYQWKDKYANIIKSQWNKLGLALDYSSERFTLDQDSKDTVNKVFIDLYNAGIIYQGVKGINWDPLQKTALSNVEVINKETPQKMYYIKYFLENSDEFVEIATVRTETLYSDRAIGINPNDLRAKNYVNKFVIHPLTKKRLPIITDDYIDQSFASGFMKISAHSLADIDILNKNNLEIVESIDESGFLTNICDEFEGMERFEAREKIAQKLQKENLISRVENYSSNIGYSDRTKVPIEILVKKQWFVKMDLFSKMVLDSLESKNKVNFYPSRFKKNLEGWMNKTYDWTISRQLWWGHQIPAWYKDEQTKVQLNSPGPDWTQDPDVLDTWFSSAIAPFSFFGWPNTYKKLKRYYPTSLLVTGHDIIFFWVSRMYFSGLYFMKDKPFNDVLLHGLIRDEQRRKMTKSLGNGIDPMVLIDQYGSDSLRWFLITNTTPGLDITYNEEKIKSSWNFMNKLWNIARFINLQENTKKVSMSKYDYWISDKFNKVESYVKKFMKKYEFTLIGKEIYKFIINDFSSWYLEFSKITKNIDFQKVIFKRLLLLLHPFIPFLTDHLFKIIYDQELLEHTFENKKLKTQKNNVDQLILVIRAIREFREKYQISKKEKIKYWIQDCQFLQEDIDAINFLTFSELSQNSENMTIVENIKIFMILPKNIEENLSKEKAQKIEFLKFEIKRAQSLLLNEKFISKAPTLKVEEEKAKLEKYQLQLKELLDEKIIE.

The short motif at 41–51 (PNVTGQLHLGH) is the 'HIGH' region element. The 'KMSKS' region motif lies at 511-515 (KMTKS). Lys-514 contacts ATP. Residues 765–827 (ENLSKEKAQK…KELLDEKIIE (63 aa)) adopt a coiled-coil conformation.

This sequence belongs to the class-I aminoacyl-tRNA synthetase family. ValS type 1 subfamily. As to quaternary structure, monomer.

The protein resides in the cytoplasm. The catalysed reaction is tRNA(Val) + L-valine + ATP = L-valyl-tRNA(Val) + AMP + diphosphate. In terms of biological role, catalyzes the attachment of valine to tRNA(Val). As ValRS can inadvertently accommodate and process structurally similar amino acids such as threonine, to avoid such errors, it has a 'posttransfer' editing activity that hydrolyzes mischarged Thr-tRNA(Val) in a tRNA-dependent manner. In Mycoplasmopsis pulmonis (strain UAB CTIP) (Mycoplasma pulmonis), this protein is Valine--tRNA ligase.